The following is a 299-amino-acid chain: S-formylglutathione hydrolase (299 aa).

Methionine 1 and histidine 140 together coordinate Cu cation. Active-site charge relay system residues include serine 161, aspartate 241, and histidine 276.

This sequence belongs to the esterase D family. As to quaternary structure, monomer.

It is found in the cytoplasm. The catalysed reaction is S-formylglutathione + H2O = formate + glutathione + H(+). Its function is as follows. Serine hydrolase involved in the detoxification of formaldehyde. This chain is S-formylglutathione hydrolase, found in Saccharomyces cerevisiae (strain ATCC 204508 / S288c) (Baker's yeast).